Reading from the N-terminus, the 355-residue chain is C-C chemokine receptor type 1 (355 aa).

At 1–34 (MEISDFTEAYPTTTEFDYGDSTPCQKTAVRAFGA) the chain is on the extracellular side. The chain crosses the membrane as a helical span at residues 35 to 60 (GLLPPLYSLVFIIGVVGNVLVILVLM). Topologically, residues 61–64 (QHRR) are cytoplasmic. Residues 65–91 (LQSMTSIYLFNLAVSDLVFLFTLPFWI) form a helical membrane-spanning segment. The Extracellular portion of the chain corresponds to 92–107 (DYKLKDDWIFGDAMCK). Cysteines 106 and 183 form a disulfide. Residues 108 to 129 (LLSGFYYLGLYSEIFFIILLTI) form a helical membrane-spanning segment. The Cytoplasmic portion of the chain corresponds to 130-146 (DRYLAIVHAVFALRART). The helical transmembrane segment at 147-171 (VTFGIITSIITWALAILASMPALYF) threads the bilayer. Over 172–197 (FKAQWEFTHRTCSPHFPYKSLKQWKR) the chain is Extracellular. Residues 198-223 (FQALKLNLLGLILPLLVMIICYAGII) form a helical membrane-spanning segment. At 224–239 (RILLRRPSEKKVKAVR) the chain is on the cytoplasmic side. Residues 240-264 (LIFAITLLFFLLWTPYNLSVFVSAF) form a helical membrane-spanning segment. At 265–281 (QDVLFTNQCEQSKQLDL) the chain is on the extracellular side. Residues 282–305 (AMQVTEVIAYTHCCVNPIIYVFVG) form a helical membrane-spanning segment. The Cytoplasmic portion of the chain corresponds to 306-355 (ERFWKYLRQLFQRHVAIPLAKWLPFLSVDQLERTSSISPSTGEHELSAGF).

This sequence belongs to the G-protein coupled receptor 1 family. Interacts with CREB3. Interacts with CCL3. Interacts with CCL15. Interacts with CCL23. Interacts with GNAI1. Interacts with PF4/CXCL4. In terms of tissue distribution, detected in the heart, spleen, lung, peritoneal exudate cells and leukocytes.

The protein resides in the cell membrane. In terms of biological role, chemokine receptor that plays a crucial role in regulating immune cell migration, inflammation, and immune responses. Contributes to the inflammatory response by recruiting immune cells, such as monocytes, macrophages, T-cells, and dendritic cells, to sites of inflammation for the clearance of pathogens and the resolution of tissue damage. When activated by its ligands including CCL3, CCL5-9, CCL13-16 and CCL23, triggers a signaling cascade within immune cells, leading to their migration towards the source of the chemokine. For example, mediates neutrophil migration after activation by CCL3 leading to the sequential release of TNF-alpha and leukotriene B4. Also mediates monocyte migration upon CXCL4 binding. Activation by CCL5 results in neuroinflammation through the ERK1/2 signaling pathway. The protein is C-C chemokine receptor type 1 (Ccr1) of Mus musculus (Mouse).